A 233-amino-acid chain; its full sequence is Tapetum-specific methyltransferase 1 (233 aa).

K8 is a binding site for substrate. S-adenosyl-L-methionine-binding positions include V52, E74, 76 to 77, S82, D100, and A129; that span reads GV. D150 provides a ligand contact to substrate. A divalent metal cation is bound at residue D150. S-adenosyl-L-methionine is bound at residue D152. 2 residues coordinate a divalent metal cation: D176 and N177.

The protein belongs to the class I-like SAM-binding methyltransferase superfamily. Cation-dependent O-methyltransferase family. CCoAMT subfamily. It depends on a divalent metal cation as a cofactor. As to expression, expressed in inflorescences and flower buds. Not detected in roots, leaves or stems. Located exclusively in the tapetum of developing stamen.

The protein operates within aromatic compound metabolism; phenylpropanoid biosynthesis. In terms of biological role, methyltransferase involved in phenylpropanoid polyamine conjugate biosynthesis. In vivo, methylates only one of the 5-hydroxyferuloyl moieties of N1,N5,N10-tri-(hydroxyferuloyl)-spermidine, while is able in vitro to convert all three 5-hydroxyferuloyl residues to the corresponding sinapoyl moieties and to methylate caffeoyl CoA and tricaffeoyl spermidine. The chain is Tapetum-specific methyltransferase 1 (TSM1) from Arabidopsis thaliana (Mouse-ear cress).